Consider the following 153-residue polypeptide: MAKFLSQDAIQKFKECFSLYDKKGKGKIPAGDLLTVMRCLGTCPTPGEVTRHLQVHKIGKDGEVDFSTFLTIMYRQQKQEDPENEIMVAMLMSDKQKKGVIPLKELRAKLTQMGEKLTPEEVDDLLKGVKVGPDGMVKYEEFVRQITLPVPDY.

4 EF-hand domains span residues 8-43 (DAIQ…LGTC), 44-79 (PTPG…QQKQ), 81-116 (DPEN…MGEK), and 117-152 (LTPE…PVPD).

It belongs to the calmodulin family. Associates with the IMAC/intermicrovillar adhesion complex.

Its subcellular location is the cell projection. It is found in the microvillus. Functionally, as part of the intermicrovillar adhesion complex/IMAC plays a role in epithelial brush border differentiation, controlling microvilli organization and length. Acts as a light chain for MYO7B and is required for efficient targeting of the IMAC to the tips of border brush microvilli. The sequence is that of Calmodulin-like protein 4 (calml4) from Xenopus tropicalis (Western clawed frog).